The sequence spans 346 residues: Probable dual-specificity RNA methyltransferase RlmN (346 aa).

The active-site Proton acceptor is the Glu90. The region spanning 96–330 (TRDRLTVCVS…VSVRASRGLD (235 aa)) is the Radical SAM core domain. Cysteines 103 and 335 form a disulfide. [4Fe-4S] cluster-binding residues include Cys110, Cys114, and Cys117. S-adenosyl-L-methionine is bound by residues 157–158 (GE), Ser187, 216–218 (SLH), and Asn292. The active-site S-methylcysteine intermediate is the Cys335.

This sequence belongs to the radical SAM superfamily. RlmN family. [4Fe-4S] cluster is required as a cofactor.

The protein localises to the cytoplasm. The enzyme catalyses adenosine(2503) in 23S rRNA + 2 reduced [2Fe-2S]-[ferredoxin] + 2 S-adenosyl-L-methionine = 2-methyladenosine(2503) in 23S rRNA + 5'-deoxyadenosine + L-methionine + 2 oxidized [2Fe-2S]-[ferredoxin] + S-adenosyl-L-homocysteine. It carries out the reaction adenosine(37) in tRNA + 2 reduced [2Fe-2S]-[ferredoxin] + 2 S-adenosyl-L-methionine = 2-methyladenosine(37) in tRNA + 5'-deoxyadenosine + L-methionine + 2 oxidized [2Fe-2S]-[ferredoxin] + S-adenosyl-L-homocysteine. Functionally, specifically methylates position 2 of adenine 2503 in 23S rRNA and position 2 of adenine 37 in tRNAs. In Synechococcus sp. (strain RCC307), this protein is Probable dual-specificity RNA methyltransferase RlmN.